Here is a 154-residue protein sequence, read N- to C-terminus: Myoglobin (154 aa).

Residues 2-148 (GLSDGEWQLV…FRNDMAAKYK (147 aa)) form the Globin domain. Residue Ser4 is modified to Phosphoserine. A nitrite-binding site is contributed by His65. Residue His65 participates in O2 binding. Thr68 is modified (phosphothreonine). His94 contributes to the heme b binding site.

The protein belongs to the globin family. As to quaternary structure, monomeric.

It localises to the cytoplasm. Its subcellular location is the sarcoplasm. It carries out the reaction Fe(III)-heme b-[protein] + nitric oxide + H2O = Fe(II)-heme b-[protein] + nitrite + 2 H(+). The enzyme catalyses H2O2 + AH2 = A + 2 H2O. Monomeric heme protein which primary function is to store oxygen and facilitate its diffusion within muscle tissues. Reversibly binds oxygen through a pentacoordinated heme iron and enables its timely and efficient release as needed during periods of heightened demand. Depending on the oxidative conditions of tissues and cells, and in addition to its ability to bind oxygen, it also has a nitrite reductase activity whereby it regulates the production of bioactive nitric oxide. Under stress conditions, like hypoxia and anoxia, it also protects cells against reactive oxygen species thanks to its pseudoperoxidase activity. This is Myoglobin (MB) from Callithrix jacchus (White-tufted-ear marmoset).